A 177-amino-acid polypeptide reads, in one-letter code: 2-C-methyl-D-erythritol 2,4-cyclodiphosphate synthase (177 aa).

Positions 23 and 25 each coordinate a divalent metal cation. Residues 23–25 (DVH) and 49–50 (HS) each bind 4-CDP-2-C-methyl-D-erythritol 2-phosphate. Histidine 57 provides a ligand contact to a divalent metal cation. 4-CDP-2-C-methyl-D-erythritol 2-phosphate contacts are provided by residues 71–73 (DIG), 76–80 (FSDTD), 115–121 (AQAPRMA), and arginine 157.

Belongs to the IspF family. In terms of assembly, homotrimer. A divalent metal cation serves as cofactor.

It catalyses the reaction 4-CDP-2-C-methyl-D-erythritol 2-phosphate = 2-C-methyl-D-erythritol 2,4-cyclic diphosphate + CMP. Its pathway is isoprenoid biosynthesis; isopentenyl diphosphate biosynthesis via DXP pathway; isopentenyl diphosphate from 1-deoxy-D-xylulose 5-phosphate: step 4/6. Its function is as follows. Involved in the biosynthesis of isopentenyl diphosphate (IPP) and dimethylallyl diphosphate (DMAPP), two major building blocks of isoprenoid compounds. Catalyzes the conversion of 4-diphosphocytidyl-2-C-methyl-D-erythritol 2-phosphate (CDP-ME2P) to 2-C-methyl-D-erythritol 2,4-cyclodiphosphate (ME-CPP) with a corresponding release of cytidine 5-monophosphate (CMP). The polypeptide is 2-C-methyl-D-erythritol 2,4-cyclodiphosphate synthase (Nitrosospira multiformis (strain ATCC 25196 / NCIMB 11849 / C 71)).